Reading from the N-terminus, the 195-residue chain is Imidazoleglycerol-phosphate dehydratase (195 aa).

This sequence belongs to the imidazoleglycerol-phosphate dehydratase family.

The protein resides in the cytoplasm. The catalysed reaction is D-erythro-1-(imidazol-4-yl)glycerol 3-phosphate = 3-(imidazol-4-yl)-2-oxopropyl phosphate + H2O. It participates in amino-acid biosynthesis; L-histidine biosynthesis; L-histidine from 5-phospho-alpha-D-ribose 1-diphosphate: step 6/9. The sequence is that of Imidazoleglycerol-phosphate dehydratase from Maridesulfovibrio salexigens (strain ATCC 14822 / DSM 2638 / NCIMB 8403 / VKM B-1763) (Desulfovibrio salexigens).